A 642-amino-acid polypeptide reads, in one-letter code: Tigger transposable element derived 5 (642 aa).

A disordered region spans residues 1–54 (MYPASPSAGPALHPVPHRARLPRPRCLAEPPRSPAPGPGSTARPPPPAPGPRPR). Pro residues predominate over residues 31 to 52 (PRSPAPGPGSTARPPPPAPGPR). Residues 56-107 (AVKMTFRKAYSIKDKLQAIERVKGGERQASVCRDFGVPGGTLRGWLKDEPKL) form the HTH psq-type domain. 2 consecutive DNA-binding regions (H-T-H motif) follow at residues 83-103 (QASVCRDFGVPGGTLRGWLKD) and 154-187 (PVIQAQAEAFARQIYGPECTFKASHGWFWRWQKR). The 74-residue stretch at 121–194 (QRKKMRLANE…QKRHGISSQR (74 aa)) folds into the HTH CENPB-type domain. A compositionally biased stretch (low complexity) spans 198 to 208 (EAEPPVAGPAP). Residues 198–230 (EAEPPVAGPAPVKEEPAQPSSAGLLLDGTPATL) form a disordered region. The 126-residue stretch at 239–364 (DEQIYNANVT…CLQQKAVLLV (126 aa)) folds into the DDE-1 domain. Residues 543 to 583 (GLPEGCGEEVAPAAPPSPASLPSSIGAGEEEEEEATEQGGV) form a disordered region.

The protein belongs to the tigger transposable element derived protein family.

Its subcellular location is the nucleus. In Rattus norvegicus (Rat), this protein is Tigger transposable element derived 5 (Tigd5).